Here is a 206-residue protein sequence, read N- to C-terminus: Small ribosomal subunit protein uS4A (206 aa).

One can recognise an S4 RNA-binding domain in the interval 98–163; that stretch reads MRLDNVVYRL…SERFKMFAEN (66 aa).

It belongs to the universal ribosomal protein uS4 family. As to quaternary structure, part of the 30S ribosomal subunit. Contacts protein S5. The interaction surface between S4 and S5 is involved in control of translational fidelity.

Its function is as follows. One of the primary rRNA binding proteins, it binds directly to 16S rRNA where it nucleates assembly of the body of the 30S subunit. Functionally, with S5 and S12 plays an important role in translational accuracy. This is Small ribosomal subunit protein uS4A from Clostridium perfringens (strain ATCC 13124 / DSM 756 / JCM 1290 / NCIMB 6125 / NCTC 8237 / Type A).